We begin with the raw amino-acid sequence, 450 residues long: ATP-dependent protease ATPase subunit HslU (450 aa).

ATP is bound by residues V29, 71–76 (GVGKTE), D261, E328, and R400.

It belongs to the ClpX chaperone family. HslU subfamily. A double ring-shaped homohexamer of HslV is capped on each side by a ring-shaped HslU homohexamer. The assembly of the HslU/HslV complex is dependent on binding of ATP.

It localises to the cytoplasm. Its function is as follows. ATPase subunit of a proteasome-like degradation complex; this subunit has chaperone activity. The binding of ATP and its subsequent hydrolysis by HslU are essential for unfolding of protein substrates subsequently hydrolyzed by HslV. HslU recognizes the N-terminal part of its protein substrates and unfolds these before they are guided to HslV for hydrolysis. The chain is ATP-dependent protease ATPase subunit HslU from Rickettsia conorii (strain ATCC VR-613 / Malish 7).